A 381-amino-acid polypeptide reads, in one-letter code: Probable peptidoglycan glycosyltransferase FtsW (381 aa).

The Cytoplasmic segment spans residues 1 to 15 (MNNKKKIVKIFFYDK). Residues 16-36 (ILFFLLISLSIIGIIIVSSAS) traverse the membrane as a helical segment. The Periplasmic portion of the chain corresponds to 37-53 (ISFGIRLHNDYFYFAKR). Residues 54 to 74 (NLLYFFLSFFLFFQIIRIPIN) traverse the membrane as a helical segment. Topologically, residues 75–81 (QLEKYNK) are cytoplasmic. A helical membrane pass occupies residues 82-102 (IALLINLFLLIIVFIIGNSIN). Over 103-109 (GAIRWIK) the chain is Periplasmic. Residues 110–130 (IGFFSIQPSECSKLILFFYIS) traverse the membrane as a helical segment. Residues 131-143 (DYIVKKNKELKNK) are Cytoplasmic-facing. Residues 144-164 (LWGFLKPIIIMLIFVILLLMQ) traverse the membrane as a helical segment. Residues 165–166 (PD) lie on the Periplasmic side of the membrane. Transmembrane regions (helical) follow at residues 167–187 (LGNSLILFLTTLLLFFLAGIN) and 188–208 (LWKCCFMFLFGLLTIFILIIF). The Periplasmic segment spans residues 209-278 (KPYRIRRILS…FSILGEELGY (70 aa)). A helical membrane pass occupies residues 279–299 (IGSIIILIMLFFVIFRIFLIG). Residues 300 to 317 (KNSFIQKKFFSGYFSFSV) are Cytoplasmic-facing. A helical transmembrane segment spans residues 318-338 (GIWISLQTIMNVGGVIGILPI). At 339 to 343 (KGLTL) the chain is on the periplasmic side. Residues 344–364 (PFISYGGSSLITIFSAIAIVI) traverse the membrane as a helical segment. Residues 365-381 (RSDFELRINKYQAYLKQ) are Cytoplasmic-facing.

Belongs to the SEDS family. FtsW subfamily.

The protein resides in the cell inner membrane. It catalyses the reaction [GlcNAc-(1-&gt;4)-Mur2Ac(oyl-L-Ala-gamma-D-Glu-L-Lys-D-Ala-D-Ala)](n)-di-trans,octa-cis-undecaprenyl diphosphate + beta-D-GlcNAc-(1-&gt;4)-Mur2Ac(oyl-L-Ala-gamma-D-Glu-L-Lys-D-Ala-D-Ala)-di-trans,octa-cis-undecaprenyl diphosphate = [GlcNAc-(1-&gt;4)-Mur2Ac(oyl-L-Ala-gamma-D-Glu-L-Lys-D-Ala-D-Ala)](n+1)-di-trans,octa-cis-undecaprenyl diphosphate + di-trans,octa-cis-undecaprenyl diphosphate + H(+). The protein operates within cell wall biogenesis; peptidoglycan biosynthesis. Functionally, peptidoglycan polymerase that is essential for cell division. In Wigglesworthia glossinidia brevipalpis, this protein is Probable peptidoglycan glycosyltransferase FtsW.